We begin with the raw amino-acid sequence, 421 residues long: Core-capsid bridging protein (421 aa).

Belongs to the adenoviridae core-capsid bridging protein family. Monomer. Homodimer. Exists in equilibrium between monomers and dimers in solution. Interacts with the histone-like nucleoprotein; this interactions bridge the virus core to the capsid. Interacts with core protein X; this interactions bridge the virus core to the capsid. Interacts with the endosome lysis protein VI; this interactions bridge the virus core to the capsid. Interacts with the peripentonal hexons. Interacts with host NPM1; this interaction might play a role in virus assembly.

It localises to the virion. The protein resides in the host nucleus. Its subcellular location is the host nucleolus. Its function is as follows. Associates loosely with the viral DNA to form an outer shell around the nucleoprotein-DNA complex and links it with the capsid by binding the endosome lysis protein. Dissociates from the viral genome during entry. Might be involved in nuclear capsid assembly of the viral particles through its association with NPM1/nucleophosmin. The polypeptide is Core-capsid bridging protein (Canine adenovirus serotype 1 (strain CLL) (CAdV-1)).